The following is a 495-amino-acid chain: Glycerol kinase (495 aa).

Position 11 (T11) interacts with ADP. ATP-binding residues include T11, T12, and S13. T11 is a binding site for sn-glycerol 3-phosphate. Position 15 (R15) interacts with ADP. Positions 81, 82, 133, and 242 each coordinate sn-glycerol 3-phosphate. Residues R81, E82, Y133, D242, and Q243 each contribute to the glycerol site. Positions 264 and 307 each coordinate ADP. ATP-binding residues include T264, G307, Q311, and G408. Residues G408 and N412 each contribute to the ADP site.

It belongs to the FGGY kinase family.

The catalysed reaction is glycerol + ATP = sn-glycerol 3-phosphate + ADP + H(+). The protein operates within polyol metabolism; glycerol degradation via glycerol kinase pathway; sn-glycerol 3-phosphate from glycerol: step 1/1. Its activity is regulated as follows. Inhibited by fructose 1,6-bisphosphate (FBP). Its function is as follows. Key enzyme in the regulation of glycerol uptake and metabolism. Catalyzes the phosphorylation of glycerol to yield sn-glycerol 3-phosphate. In Alkalilimnicola ehrlichii (strain ATCC BAA-1101 / DSM 17681 / MLHE-1), this protein is Glycerol kinase.